We begin with the raw amino-acid sequence, 1141 residues long: Envelopment polyprotein (1141 aa).

A signal peptide spans 1 to 19; sequence MFCLCLSLLGLLLCWPAAT. Residues 20-489 are Lumenal-facing; the sequence is RNLLELKVEC…CVPGLHGWAT (470 aa). Intrachain disulfides connect C29-C154, C63-C160, C112-C131, C136-C141, C178-C188, and C213-C252. Residue N137 is glycosylated (N-linked (GlcNAc...) asparagine; by host). N-linked (GlcNAc...) asparagine; by host glycosylation is present at N352. Disulfide bonds link C381-C440, C385-C394, C410-C429, and C457-C480. Residue N404 is glycosylated (N-linked (GlcNAc...) asparagine; by host). A helical membrane pass occupies residues 490 to 510; sequence ISLLITFCFGWLAIPLLSMII. Residues 511-632 lie on the Cytoplasmic side of the membrane; it reads IRFLLIFTYL…LSMFRYKSKC (122 aa). Positions 521–538 are binding to the ribonucleoprotein; it reads CSKYSTDSKFKLIIEKVK. 2 consecutive CCHC-type zinc fingers follow at residues 550-570 and 575-596; these read CEVCQQGCETAKELESHKKSC and CPYCLNPTEATESALQAHFKVC. 3 binding to the ribonucleoprotein regions span residues 593 to 610, 597 to 608, and 616 to 630; these read FKVCKLTTRFQENLKKSL, KLTTRFQENLKK, and KRGLYRTLSMFRYKS. Positions 612–653 are inhibition of interferon induction; it reads TYEPKRGLYRTLSMFRYKSKCYVGLVWCILLTMELIVWAASA. One can recognise an ITAM domain in the interval 616-639; that stretch reads KRGLYRTLSMFRYKSKCYVGLVWC. 2 positions are modified to phosphotyrosine: Y620 and Y633. The YxxL motif lies at 620-623; the sequence is YRTL. A helical transmembrane segment spans residues 633–653; sequence YVGLVWCILLTMELIVWAASA. Residues 654–1109 are Lumenal-facing; sequence ETINLEPGWT…EWLLGILSGN (456 aa). 8 disulfide bridges follow: C740–C775, C744–C782, C756–C889, C770–C900, C785–C908, C811–C820, C828–C837, and C868–C872. A fusion loop region spans residues 762–782; sequence FEFETGWGCNPPDCPGVGTGC. N-linked (GlcNAc...) asparagine; by host glycosylation is present at N932. 5 cysteine pairs are disulfide-bonded: C974–C1004, C997–C1049, C1014–C1019, C1050–C1055, and C1089–C1093. Residues 1110–1130 traverse the membrane as a helical segment; that stretch reads WMVVAVLIALFIFSLLLFSLC. Residues 1126–1141 form a binding to the ribonucleoprotein region; that stretch reads LFSLCCPRRQNYKKNK. At 1131 to 1141 the chain is on the cytoplasmic side; that stretch reads CPRRQNYKKNK.

Belongs to the hantavirus envelope glycoprotein family. As to quaternary structure, homodimer. Homotetramer; forms heterotetrameric Gn-Gc spikes in the pre-fusion conformation. Interacts (via C-terminus) with the nucleoprotein. Interacts with host TUFM; this interaction contributes to the virus-induced degradation of mitochondria by autophagy, which leads to degradation of host MAVS and inhibition of type I interferon (IFN) responses. Interacts with host MAP1LC3B; this interaction contributes to the virus-induced degradation of mitochondria by autophagy, which leads to degradation of host MAVS and inhibition of type I interferon (IFN) responses. In terms of assembly, homodimer. Homotetramer; forms heterotetrameric Gn-Gc spikes in the pre-fusion conformation. Homotrimer; forms homotrimer in the post-fusion conformation at acidic pH. Interacts (via C-terminus) with the nucleoprotein. Envelope polyprotein precursor is quickly cleaved in vivo just after synthesis, presumably by host signal peptidase.

It localises to the virion membrane. The protein resides in the host cell surface. Its subcellular location is the host Golgi apparatus membrane. It is found in the host endoplasmic reticulum membrane. The protein localises to the host mitochondrion. Forms homotetramers with glycoprotein C at the surface of the virion. Attaches the virion to host cell receptors including integrin alpha5/ITGB1. This attachment induces virion internalization predominantly through clathrin-dependent endocytosis. Mediates the assembly and budding of infectious virus particles through its interaction with the nucleocapsid protein and the viral genome. May dysregulate normal immune and endothelial cell responses through an ITAM motif. Translocates to mitochondria, binds to host TUFM and recruits MAP1LC3B. These interactions induce mitochondrial autophagy and therefore destruction of host MAVS leading to inhibition of type I interferon (IFN) responses. Concomitant breakdown of glycoprotein N is apparently prevented by the nucleoprotein that may inhibit Gn-stimulated autophagosome-lysosome fusion. Interacts with the viral genomic RNA. Inhibits the host RIG-I/TBK1 pathway by disrupting the formation of TBK1-TRAF3 complexes and downstream signaling responses required for IFN-beta transcription. In terms of biological role, forms homotetramers with glycoprotein N at the surface of the virion. Attaches the virion to host cell receptors including integrin ITGAV/ITGB3. This attachment induces virion internalization predominantly through clathrin-dependent endocytosis. Class II fusion protein that promotes fusion of viral membrane with host endosomal membrane after endocytosis of the virion. The chain is Envelopment polyprotein (GP) from Tula orthohantavirus (TULV).